Consider the following 140-residue polypeptide: ATP synthase epsilon chain (140 aa).

This sequence belongs to the ATPase epsilon chain family. As to quaternary structure, F-type ATPases have 2 components, CF(1) - the catalytic core - and CF(0) - the membrane proton channel. CF(1) has five subunits: alpha(3), beta(3), gamma(1), delta(1), epsilon(1). CF(0) has three main subunits: a, b and c.

It localises to the cell inner membrane. Produces ATP from ADP in the presence of a proton gradient across the membrane. The chain is ATP synthase epsilon chain from Neisseria meningitidis serogroup A / serotype 4A (strain DSM 15465 / Z2491).